Here is a 496-residue protein sequence, read N- to C-terminus: N-succinylglutamate 5-semialdehyde dehydrogenase (496 aa).

Position 229–234 (229–234) interacts with NAD(+); the sequence is GSYATG. Catalysis depends on residues Glu-252 and Cys-286.

The protein belongs to the aldehyde dehydrogenase family. AstD subfamily.

It catalyses the reaction N-succinyl-L-glutamate 5-semialdehyde + NAD(+) + H2O = N-succinyl-L-glutamate + NADH + 2 H(+). It functions in the pathway amino-acid degradation; L-arginine degradation via AST pathway; L-glutamate and succinate from L-arginine: step 4/5. Functionally, catalyzes the NAD-dependent reduction of succinylglutamate semialdehyde into succinylglutamate. The sequence is that of N-succinylglutamate 5-semialdehyde dehydrogenase from Legionella pneumophila subsp. pneumophila (strain Philadelphia 1 / ATCC 33152 / DSM 7513).